A 471-amino-acid polypeptide reads, in one-letter code: MSAPTNLEQVLAAGGNTVEMLRNSQIGAYVYPVVAPEFSNWRTEQWAWRNSAVLFDQTHHMVDLYIRGKDALKLLSDTMINSPKGWEPNKAKQYVPVTPYGHVIGDGIIFYLAEEEFVYVGRAPAANWLMYHAQTGGYNVDIVHDDRSPSRPMGKPVQRISWRFQIQGPKAWDVIEKLHGGTLEKLKFFNMAEMNIAGMKIRTLRHGMAGAPGLEIWGPYETQEKARNAILEAGKEFGLIPVGSRAYPSNTLESGWIPSPLPAIYTGDKLKAYREWLPANSYEASGAIGGSFVSSNIEDYYVNPYEIGYGPFVKFDHDFIGRDALEAIDPATQRKKVTLAWNGDDMAKIYASLFDTEADAHYKFFDLPLANYANTNADAVLDAAGNVVGMSMFTGYSYNEKRALSLATIDHEIPVGTELTVLWGEENGGTRKTTVEPHKQMAVRAVVSPVPYSVTARETYEGGWRKAAVTA.

Position 31 (Y31) interacts with substrate. Position 57 (Q57) interacts with (6S)-5,6,7,8-tetrahydrofolate. Residue H60 participates in substrate binding. Q93 and V120 together coordinate (6S)-5,6,7,8-tetrahydrofolate. Substrate is bound at residue R122. Q165 and E215 together coordinate (6S)-5,6,7,8-tetrahydrofolate. Position 247–250 (247–250 (YPSN)) interacts with substrate. W256 lines the (6S)-5,6,7,8-tetrahydrofolate pocket.

The protein belongs to the GcvT family. In terms of assembly, homodimer.

It catalyses the reaction vanillate + (6S)-5,6,7,8-tetrahydrofolate = (6S)-5-methyl-5,6,7,8-tetrahydrofolate + 3,4-dihydroxybenzoate. The enzyme catalyses 3-O-methylgallate + (6S)-5,6,7,8-tetrahydrofolate = 3,4,5-trihydroxybenzoate + (6S)-5-methyl-5,6,7,8-tetrahydrofolate. Its pathway is secondary metabolite metabolism; lignin degradation. Involved in the catabolism of vanillate and syringate. Catalyzes the transfer of a methyl moiety from vanillate or 3-O-methylgallate (3MGA) to tetrahydrofolate, forming protocatechuate (PCA) or gallate, respectively, and methyl-tetrahydrofolate. Has similar activities with both substrates. Cannot use syringate. Uses an ordered, sequential kinetic mechanism. The protein is Vanillate/3-O-methylgallate O-demethylase of Sphingobium sp. (strain NBRC 103272 / SYK-6).